Consider the following 453-residue polypeptide: Putative amino acid/polyamine transporter MPH_07630_2 (453 aa).

Transmembrane regions (helical) follow at residues 2 to 21 (IGFSFSIVTSWSALSGVLVV), 30 to 50 (VMIWSWVGVCAVSLAVAYSMA), and 81 to 101 (VCGWFMLIGILSMGAVNNFIA). N-linked (GlcNAc...) asparagine glycosylation is present at Asn110. 2 helical membrane passes run 121–141 (WHAVLVAYLICIVAALSSIFL) and 151–171 (AILIWNICSFFICFITILATN). The N-linked (GlcNAc...) asparagine glycan is linked to Asn186. Transmembrane regions (helical) follow at residues 193-213 (AYAAIIGILQSAFGMCCYDAP) and 231-251 (IVMSVWLGFLTGFVFLISLCF). A glycan (N-linked (GlcNAc...) asparagine) is linked at Asn274. 4 helical membrane-spanning segments follow: residues 277–297 (GSVAGTCALTSLITVVALVCA), 330–350 (LGVPVAGILATAAVQAAFNSI), 358–378 (FNTVISIATEGFYVSYAIPLL), and 403–423 (GLLANVVGFTYLAFAVITFNF). N-linked (GlcNAc...) asparagine glycosylation is present at Asn435.

The protein belongs to the amino acid-polyamine-organocation (APC) superfamily.

It localises to the membrane. The protein is Putative amino acid/polyamine transporter MPH_07630_2 of Macrophomina phaseolina (strain MS6) (Charcoal rot fungus).